The chain runs to 124 residues: RNA polymerase-binding protein RbpA (124 aa).

4 residues coordinate Zn(2+): C34, H38, C56, and C59. Positions 73–124 are sufficient for interaction with HrdB (SigA); the sequence is EKKAKPARTHWDMLMERRTREELEEVLEERLAVLRSGAMNIAVHPRDSRKSA.

Belongs to the RNA polymerase-binding protein RbpA family. Homodimer. Forms a complex with the RNAP, and a complex with RNAP plus principal sigma factor HrdB associated with promoter. Binds to free principal sigma factors HrdB and HrdA, probably via the sigma-2 domain, but not to 6 other sigma factors tested. Requires Zn(2+) as cofactor.

Functionally, binds to RNA polymerase (RNAP), stimulating transcription from principal, but not alternative sigma factor promoters. Stimulates transcription from several principal sigma factor HrdB (SigA)-dependent promoters but not from a SigR-dependent promoter. Stimulation occurs in the presence of the transcription initiation inhibitor rifampicin (Rif). The protein is RNA polymerase-binding protein RbpA of Streptomyces coelicolor (strain ATCC BAA-471 / A3(2) / M145).